The following is a 94-amino-acid chain: Pyrimidine/purine nucleoside phosphorylase (94 aa).

This sequence belongs to the nucleoside phosphorylase PpnP family.

The enzyme catalyses a purine D-ribonucleoside + phosphate = a purine nucleobase + alpha-D-ribose 1-phosphate. It catalyses the reaction adenosine + phosphate = alpha-D-ribose 1-phosphate + adenine. The catalysed reaction is cytidine + phosphate = cytosine + alpha-D-ribose 1-phosphate. It carries out the reaction guanosine + phosphate = alpha-D-ribose 1-phosphate + guanine. The enzyme catalyses inosine + phosphate = alpha-D-ribose 1-phosphate + hypoxanthine. It catalyses the reaction thymidine + phosphate = 2-deoxy-alpha-D-ribose 1-phosphate + thymine. The catalysed reaction is uridine + phosphate = alpha-D-ribose 1-phosphate + uracil. It carries out the reaction xanthosine + phosphate = alpha-D-ribose 1-phosphate + xanthine. Catalyzes the phosphorolysis of diverse nucleosides, yielding D-ribose 1-phosphate and the respective free bases. Can use uridine, adenosine, guanosine, cytidine, thymidine, inosine and xanthosine as substrates. Also catalyzes the reverse reactions. This chain is Pyrimidine/purine nucleoside phosphorylase, found in Salmonella arizonae (strain ATCC BAA-731 / CDC346-86 / RSK2980).